Consider the following 116-residue polypeptide: U16-barytoxin-Tl1c (116 aa).

The signal sequence occupies residues 1 to 20 (MKTIIVFLSLLVLATKFGDA). Residues 21–74 (NEGVNQEQMKEVIQNEFREDFLNEMAAMSLLQQLEAIESTLLEKEADRNSRQKR) constitute a propeptide that is removed on maturation. 3 cysteine pairs are disulfide-bonded: Cys-75-Cys-90, Cys-82-Cys-95, and Cys-89-Cys-110.

This sequence belongs to the neurotoxin 14 (magi-1) family. 06 (ICK-Trit) subfamily. Expressed by the venom gland.

The protein localises to the secreted. Ion channel inhibitor. This is U16-barytoxin-Tl1c from Trittame loki (Brush-footed trapdoor spider).